The chain runs to 394 residues: Myb-like protein R (394 aa).

2 helical membrane-spanning segments follow: residues 11–31 (IGAQ…EFII) and 99–119 (FFIG…LIIF). In terms of domain architecture, Myb-like spans 325-377 (GNWSLDEQKALMVEVSTLGNKSEINWFFISKQLFLKGISRNARECQRKHESIQ).

It localises to the membrane. The polypeptide is Myb-like protein R (mybR) (Dictyostelium discoideum (Social amoeba)).